A 136-amino-acid polypeptide reads, in one-letter code: Histone H3, embryonic (136 aa).

A disordered region spans residues 1-43; it reads MARTKQTARKSTGGKAPRKQLATKAARKSAPATGGVKKPHRYR. At lysine 5 the chain carries N6-methylated lysine. Lysine 10 is subject to N6-acetyllysine; alternate. The residue at position 10 (lysine 10) is an N6-methylated lysine; alternate. Residue serine 11 is modified to Phosphoserine. Lysine 15 and lysine 24 each carry N6-acetyllysine. N6-methylated lysine is present on residues lysine 28, lysine 37, and lysine 80.

This sequence belongs to the histone H3 family. As to quaternary structure, the nucleosome is a histone octamer containing two molecules each of H2A, H2B, H3 and H4 assembled in one H3-H4 heterotetramer and two H2A-H2B heterodimers. The octamer wraps approximately 147 bp of DNA. Acetylation is generally linked to gene activation. In terms of processing, methylation at Lys-5 is linked to gene activation. Methylation at Lys-10 is linked to gene repression.

The protein resides in the nucleus. It is found in the chromosome. Functionally, core component of nucleosome. Nucleosomes wrap and compact DNA into chromatin, limiting DNA accessibility to the cellular machineries which require DNA as a template. Histones thereby play a central role in transcription regulation, DNA repair, DNA replication and chromosomal stability. DNA accessibility is regulated via a complex set of post-translational modifications of histones, also called histone code, and nucleosome remodeling. This Paracentrotus lividus (Common sea urchin) protein is Histone H3, embryonic.